The following is a 320-amino-acid chain: Beta-carotene 3-hydroxylase, chloroplastic (320 aa).

The N-terminal 78 residues, Met1–Val78, are a transit peptide targeting the chloroplast. Helical transmembrane passes span Tyr118 to Tyr138 and Leu152 to Trp172. Positions Ala165–Phe292 constitute a Fatty acid hydroxylase domain. Residues His177–His182 carry the Histidine box-1 motif. The Histidine box-2 motif lies at His189 to His193. Helical transmembrane passes span Asp204 to His224 and Ile228 to Phe248. Residues His250–His255 carry the Histidine box-3 motif. A Histidine box-4 motif is present at residues His276–His280.

Belongs to the sterol desaturase family.

The protein localises to the plastid. It is found in the chloroplast membrane. It catalyses the reaction all-trans-beta-carotene + 4 reduced [2Fe-2S]-[ferredoxin] + 2 O2 + 4 H(+) = all-trans-zeaxanthin + 4 oxidized [2Fe-2S]-[ferredoxin] + 2 H2O. Functionally, nonheme diiron monooxygenase involved in the biosynthesis of xanthophylls. Specific for beta-ring hydroxylations of beta-carotene. Uses ferredoxin as an electron donor. The sequence is that of Beta-carotene 3-hydroxylase, chloroplastic (BHY) from Gentiana lutea (Yellow gentian).